A 200-amino-acid polypeptide reads, in one-letter code: Shikimate kinase (200 aa).

Residue Gly41–Ser46 coordinates ATP. Ser45 is a binding site for Mg(2+). Positions 63, 87, and 109 each coordinate substrate. Arg147 is an ATP binding site. Arg166 lines the substrate pocket.

Belongs to the shikimate kinase family. In terms of assembly, monomer. Mg(2+) is required as a cofactor.

The protein resides in the cytoplasm. It carries out the reaction shikimate + ATP = 3-phosphoshikimate + ADP + H(+). It participates in metabolic intermediate biosynthesis; chorismate biosynthesis; chorismate from D-erythrose 4-phosphate and phosphoenolpyruvate: step 5/7. Its function is as follows. Catalyzes the specific phosphorylation of the 3-hydroxyl group of shikimic acid using ATP as a cosubstrate. The protein is Shikimate kinase of Caulobacter vibrioides (strain NA1000 / CB15N) (Caulobacter crescentus).